Reading from the N-terminus, the 431-residue chain is Gamma-glutamyl phosphate reductase (431 aa).

Belongs to the gamma-glutamyl phosphate reductase family.

The protein resides in the cytoplasm. It catalyses the reaction L-glutamate 5-semialdehyde + phosphate + NADP(+) = L-glutamyl 5-phosphate + NADPH + H(+). The protein operates within amino-acid biosynthesis; L-proline biosynthesis; L-glutamate 5-semialdehyde from L-glutamate: step 2/2. Its function is as follows. Catalyzes the NADPH-dependent reduction of L-glutamate 5-phosphate into L-glutamate 5-semialdehyde and phosphate. The product spontaneously undergoes cyclization to form 1-pyrroline-5-carboxylate. The sequence is that of Gamma-glutamyl phosphate reductase from Methylobacterium nodulans (strain LMG 21967 / CNCM I-2342 / ORS 2060).